Here is a 415-residue protein sequence, read N- to C-terminus: Levansucrase (415 aa).

Sucrose is bound by residues tryptophan 45, aspartate 46, alanine 132, arginine 202, and aspartate 203. Aspartate 46 (nucleophile) is an active-site residue. Glutamate 287 functions as the Proton donor/acceptor in the catalytic mechanism.

The protein belongs to the glycosyl hydrolase 68 family.

The enzyme catalyses [6)-beta-D-fructofuranosyl-(2-&gt;](n) alpha-D-glucopyranoside + sucrose = [6)-beta-D-fructofuranosyl-(2-&gt;](n+1) alpha-D-glucopyranoside + D-glucose. Its function is as follows. Catalyzes the synthesis of levan, a fructose polymer, by transferring the fructosyl moiety from sucrose to a growing acceptor molecule. The chain is Levansucrase from Rahnella aquatilis (strain ATCC 33071 / DSM 4594 / JCM 1683 / NBRC 105701 / NCIMB 13365 / CIP 78.65).